Here is a 928-residue protein sequence, read N- to C-terminus: Kinesin heavy chain (928 aa).

In terms of domain architecture, Kinesin motor spans 7–330 (SIKVVARFRP…LRFGMRAKSI (324 aa)). Residues 88–95 (GQTGAGKS) and 238–245 (GSEKVGKT) each bind ATP. A coiled-coil region spans residues 343 to 866 (AELKQMLAKA…VKDRLEAAKA (524 aa)). Over residues 395-409 (SKSASTTARPSTPSR) the composition is skewed to low complexity. Disordered regions lie at residues 395-434 (SKSASTTARPSTPSRLLPESRAETPAISDRAGTPSLPLDK) and 893-928 (GGGDAVAGATATNPTIATLQQNPPENKRSSWFFQKS). A compositionally biased stretch (polar residues) spans 905 to 928 (NPTIATLQQNPPENKRSSWFFQKS).

The protein belongs to the TRAFAC class myosin-kinesin ATPase superfamily. Kinesin family. Kinesin subfamily.

The protein localises to the cytoplasm. Its subcellular location is the cytoskeleton. Its function is as follows. Kinesin is a microtubule-associated force-producing protein that may play a role in organelle transport. Its motor activity is directed toward the microtubule's plus end. The sequence is that of Kinesin heavy chain (kin) from Neurospora crassa (strain ATCC 24698 / 74-OR23-1A / CBS 708.71 / DSM 1257 / FGSC 987).